The following is a 115-amino-acid chain: U3-lycotoxin-Ls1a (115 aa).

The signal sequence occupies residues 1–20 (MKFVLLFGVFLVTLFSYSSA). The propeptide occupies 21–44 (EMLDDFDQAAEDELLSLIEKEEAR). 4 cysteine pairs are disulfide-bonded: Cys48/Cys63, Cys55/Cys72, Cys62/Cys87, and Cys74/Cys85.

Belongs to the neurotoxin 19 (CSTX) family. 01 subfamily. Expressed by the venom gland.

It localises to the secreted. The chain is U3-lycotoxin-Ls1a from Lycosa singoriensis (Wolf spider).